Consider the following 511-residue polypeptide: Inner membrane ABC transporter permease protein YnjC (511 aa).

Residues 1–8 (MATPLRYA) lie on the Cytoplasmic side of the membrane. The helical transmembrane segment at 9 to 29 (LIFLLWAMVAVIYAPLIPAAL) threads the bilayer. Over 30–62 (TLISPALSLTHWQALFADPQLPQALLATLVSTT) the chain is Periplasmic. Positions 54-255 (LLATLVSTTI…MLLLAAYVLL (202 aa)) constitute an ABC transmembrane type-1 1 domain. A helical membrane pass occupies residues 63 to 83 (IAAVGALLIALLVIVALWPGP). The Cytoplasmic portion of the chain corresponds to 84–91 (KWQRMCAR). A helical transmembrane segment spans residues 92 to 112 (LPWLLAIPHVAFATSALLLFA). Residues 113–130 (DGGLLYDYFPYFTPPMDR) are Periplasmic-facing. A helical membrane pass occupies residues 131–151 (FGIGLGLTLAVKESAFLLWIL). At 152 to 189 (AAVLSEKWLLQQVIVLDSLGYSRWQCLNWLLLPSVAPA) the chain is on the cytoplasmic side. Residues 190–210 (LAMAMLAIVAWSLSVVDVAII) form a helical membrane-spanning segment. Over 211 to 239 (LGPGNPPTLAVISWQWLTQGDIDQQTKGA) the chain is Periplasmic. A helical membrane pass occupies residues 240–260 (LASLLLMLLLAAYVLLSYLLW). Residues 261 to 284 (RSWRRTIPRVDGVRKPATPLLPGN) lie on the Cytoplasmic side of the membrane. Residues 285–305 (TLAIFLPLTGVLCVVLLAILA) traverse the membrane as a helical segment. Topologically, residues 306–318 (DQSTINSEALINS) are periplasmic. Residues 315-496 (LINSLTMGLV…LLPLIIFALT (182 aa)) form the ABC transmembrane type-1 2 domain. The chain crosses the membrane as a helical span at residues 319 to 339 (LTMGLVATFIALLLLLLWLEW). Residues 340-345 (GPQRRQ) are Cytoplasmic-facing. A helical transmembrane segment spans residues 346–366 (LWLWLPILLPALPLVAGQYTL). At 367–374 (ALWLKLDG) the chain is on the periplasmic side. The chain crosses the membrane as a helical span at residues 375-395 (SWTAVVWGHLLWVMPWMLFIL). Topologically, residues 396 to 432 (QPAWQRIDSRLILIAQTLGWSRAKIFFYVKCPLMLRP) are cytoplasmic. The helical transmembrane segment at 433–453 (VLIAFAVGFAVGIAQYMPTLW) threads the bilayer. The Periplasmic segment spans residues 454–485 (LGAGRFPTLTTEAVALSSGGSNGILAAQALWQ). A helical transmembrane segment spans residues 486-506 (LLLPLIIFALTALVAKWVGYV). The Cytoplasmic portion of the chain corresponds to 507 to 511 (RQGLR).

Belongs to the binding-protein-dependent transport system permease family.

Its subcellular location is the cell inner membrane. Probably part of the binding-protein-dependent transport system YnjCD. Probably responsible for the translocation of the substrate across the membrane. The polypeptide is Inner membrane ABC transporter permease protein YnjC (ynjC) (Escherichia coli (strain K12)).